Consider the following 461-residue polypeptide: Fibrinogen C domain-containing protein 1 (461 aa).

The tract at residues 1–24 is disordered; it reads MVNDRWKTMGGAAQLEDRPRDKPQ. Topologically, residues 1-33 are cytoplasmic; that stretch reads MVNDRWKTMGGAAQLEDRPRDKPQRPSCGYVLC. The span at 15–24 shows a compositional bias: basic and acidic residues; sequence LEDRPRDKPQ. A helical; Signal-anchor for type II membrane protein membrane pass occupies residues 34–54; that stretch reads TVLLALAVLLAVAVTGAVLFL. Residues 55 to 461 lie on the Extracellular side of the membrane; sequence NHAHAPGTAP…MKIRPVREDR (407 aa). A disordered region spans residues 214–238; it reads GRPRNKADLQRAPARGTRPRGCATG. A Fibrinogen C-terminal domain is found at 235-458; sequence CATGSRPRDC…FSEMKIRPVR (224 aa). Residues cysteine 244 and cysteine 273 are joined by a disulfide bond. A glycan (N-linked (GlcNAc...) asparagine) is linked at asparagine 340. Positions 393 and 395 each coordinate Ca(2+). A disulfide bond links cysteine 401 and cysteine 414.

In terms of assembly, homotetramer; disulfide-linked. As to expression, expressed in the small and large intestinal epithelial cells with a highly polarized localization to the apical surface corresponding to the brush border and in the ducts of the salivary gland.

It localises to the membrane. Its function is as follows. Acetyl group-binding receptor which shows a high-affinity and calcium-dependent binding to acetylated structures such as chitin, some N-acetylated carbohydrates, and amino acids, but not to their non-acetylated counterparts. Can facilitate the endocytosis of acetylated components. In Homo sapiens (Human), this protein is Fibrinogen C domain-containing protein 1 (FIBCD1).